Consider the following 952-residue polypeptide: GATA zinc finger domain-containing protein 5 (952 aa).

Disordered regions lie at residues 1-36 and 138-197; these read MDYQ…DSPS and PTPL…SPKQ. The segment covering 10-24 has biased composition (polar residues); the sequence is QISQEFPTDISTTKS. Residues 148–157 are compositionally biased toward pro residues; that stretch reads SPPPPPPPPA. The span at 158–196 shows a compositional bias: low complexity; sequence ATTTTTITTTTTTSAGNSTTKNNNNNNNNNNNNNGKSPK. The segment at 241–266 adopts a GATA-type zinc-finger fold; it reads CYQCNTSNTPEWRKGPEGPATLCNAC. Disordered stretches follow at residues 380–418, 433–478, 634–699, and 732–816; these read MTPS…HEQP, LLSS…GGGG, QNNS…NKNN, and QQQE…LSVN. Positions 393 to 412 are enriched in basic residues; it reads KTTKTKPKPKSKSKPGKITH. The segment covering 445–467 has biased composition (low complexity); it reads SSSSSCGTSLNSSLGSSSGTITN. The span at 468 to 478 shows a compositional bias: gly residues; that stretch reads SGGGSSGGGGG. Residues 634–653 show a composition bias toward polar residues; the sequence is QNNSFSGPNDQNPYVPSVSL. 3 stretches are compositionally biased toward low complexity: residues 654–668, 678–699, and 732–745; these read NSNK…NNNK, NNKN…NKNN, and QQQE…EQQQ. Positions 746–762 are enriched in polar residues; that stretch reads NLSINNSNQTNENEILG. Over residues 763-814 the composition is skewed to low complexity; sequence TTTTTTTSTATIITSQVPMNLSPNSDDNQSSSNYSTLSDSGSSPTDSFSGLS.

This is GATA zinc finger domain-containing protein 5 (gtaE) from Dictyostelium discoideum (Social amoeba).